The primary structure comprises 492 residues: Sestrin-1 (492 aa).

Positions 71 to 252 (FADSFAALGR…ICDITNGNHS (182 aa)) are N-terminal domain; may mediate the alkylhydroperoxide reductase activity. C130 functions as the Cysteine sulfenic acid (-SOH) intermediate in the catalytic mechanism. S293 and S314 each carry phosphoserine. Residues 321 to 492 (PARDVSRHFE…ALRAITRYMT (172 aa)) are C-terminal domain; mediates TORC1 regulation. Residues 386–389 (TYNT), T398, and E463 each bind L-leucine.

This sequence belongs to the sestrin family. Interacts with the GATOR2 complex which is composed of MIOS, SEC13, SEH1L, WDR24 and WDR59; the interaction is negatively regulated by leucine. Interacts with RRAGA, RRAGB, RRAGC and RRAGD; may function as a guanine nucleotide dissociation inhibitor for RRAGs and regulate them. Interacts with KEAP1, RBX1 and SQSTM1; in the SQSTM1-dependent autophagic degradation of KEAP1. May interact with PRDX1. Highly expressed in heart and also detected in liver and skeletal muscles (at protein level).

Its subcellular location is the nucleus. The protein resides in the cytoplasm. It catalyses the reaction a hydroperoxide + L-cysteinyl-[protein] = S-hydroxy-L-cysteinyl-[protein] + an alcohol. In terms of biological role, functions as an intracellular leucine sensor that negatively regulates the TORC1 signaling pathway through the GATOR complex. In absence of leucine, binds the GATOR subcomplex GATOR2 and prevents TORC1 signaling. Binding of leucine to SESN2 disrupts its interaction with GATOR2 thereby activating the TORC1 signaling pathway. This stress-inducible metabolic regulator may also play a role in protection against oxidative and genotoxic stresses. May positively regulate the transcription by NFE2L2 of genes involved in the response to oxidative stress by facilitating the SQSTM1-mediated autophagic degradation of KEAP1. Moreover, may prevent the accumulation of reactive oxygen species (ROS) through the alkylhydroperoxide reductase activity born by the N-terminal domain of the protein. Was originally reported to contribute to oxidative stress resistance by reducing PRDX1. However, this could not be confirmed. The polypeptide is Sestrin-1 (Mus musculus (Mouse)).